A 349-amino-acid polypeptide reads, in one-letter code: tRNA pseudouridine synthase D (349 aa).

Phe27 is a substrate binding site. The Nucleophile role is filled by Asp80. Residue Asn129 coordinates substrate. The 149-residue stretch at 155–303 folds into the TRUD domain; the sequence is GVPNYFGAQR…VEASRRAMLL (149 aa). Residue Phe329 participates in substrate binding.

The protein belongs to the pseudouridine synthase TruD family.

The enzyme catalyses uridine(13) in tRNA = pseudouridine(13) in tRNA. In terms of biological role, responsible for synthesis of pseudouridine from uracil-13 in transfer RNAs. This is tRNA pseudouridine synthase D from Salmonella dublin (strain CT_02021853).